A 373-amino-acid polypeptide reads, in one-letter code: Histidine protein methyltransferase 1 homolog (373 aa).

The segment covering 30 to 42 (SKESLVSERQKGT) has biased composition (basic and acidic residues). Disordered stretches follow at residues 30–52 (SKESLVSERQKGTHRDKKCSTEQ) and 64–94 (KSERNEAPSQDPDSSFGAANSSSNLEPHEEK). Residues 70 to 88 (APSQDPDSSFGAANSSSNL) show a composition bias toward polar residues. 2 positions are modified to phosphoserine: serine 72 and serine 77. Histidine 154 bears the Tele-methylhistidine mark. Residues 168–172 (IWECT), glycine 195, and 216–218 (QDY) each bind S-adenosyl-L-methionine. The Nuclear localization signal motif lies at 247 to 253 (PDVKRLR). S-adenosyl-L-methionine is bound by residues 269–271 (GEW) and serine 294.

Belongs to the methyltransferase superfamily. METTL18 family. In terms of assembly, interacts with GRWD1 and members of the heat shock protein 90 and 70 families; these proteins may possibly be methylation substrates for the enzyme. Monomethylated at His-154 through automethylation. Automethylation at His-154 positively regulates the methyltransferase activity toward RPL3. Probably methylated on other residues.

It is found in the cytoplasm. Its subcellular location is the cytosol. The protein resides in the nucleus. The protein localises to the nucleolus. It carries out the reaction L-histidyl-[protein] + S-adenosyl-L-methionine = N(tele)-methyl-L-histidyl-[protein] + S-adenosyl-L-homocysteine + H(+). Its function is as follows. Protein-L-histidine N-tele-methyltransferase that specifically monomethylates RPL3, thereby regulating translation elongation. Histidine methylation of RPL3 regulates translation elongation by slowing ribosome traversal on tyrosine codons: slower elongation provides enough time for proper folding of synthesized proteins and prevents cellular aggregation of tyrosine-rich proteins. The chain is Histidine protein methyltransferase 1 homolog (METTL18) from Bos taurus (Bovine).